A 365-amino-acid chain; its full sequence is GDSL esterase/lipase At3g62280 (365 aa).

The first 25 residues, 1-25 (MDYTVSSLQCFFLVLCLSLLVCSNS), serve as a signal peptide directing secretion. The Nucleophile role is filled by Ser43. 3 N-linked (GlcNAc...) asparagine glycosylation sites follow: Asn137, Asn178, and Asn231. Active-site residues include Asp333 and His336.

It belongs to the 'GDSL' lipolytic enzyme family.

It localises to the secreted. The polypeptide is GDSL esterase/lipase At3g62280 (Arabidopsis thaliana (Mouse-ear cress)).